Here is a 448-residue protein sequence, read N- to C-terminus: Glucose-6-phosphate isomerase (448 aa).

The active-site Proton donor is the Glu-291. Catalysis depends on residues His-312 and Lys-425.

This sequence belongs to the GPI family.

It is found in the cytoplasm. The catalysed reaction is alpha-D-glucose 6-phosphate = beta-D-fructose 6-phosphate. The protein operates within carbohydrate biosynthesis; gluconeogenesis. Its pathway is carbohydrate degradation; glycolysis; D-glyceraldehyde 3-phosphate and glycerone phosphate from D-glucose: step 2/4. Its function is as follows. Catalyzes the reversible isomerization of glucose-6-phosphate to fructose-6-phosphate. The polypeptide is Glucose-6-phosphate isomerase (Symbiobacterium thermophilum (strain DSM 24528 / JCM 14929 / IAM 14863 / T)).